The following is a 322-amino-acid chain: Acetyl-coenzyme A carboxylase carboxyl transferase subunit alpha (322 aa).

Positions 30–293 (AVDISAEILR…KKALQDSLKL (264 aa)) constitute a CoA carboxyltransferase C-terminal domain.

The protein belongs to the AccA family. Acetyl-CoA carboxylase is a heterohexamer composed of biotin carboxyl carrier protein (AccB), biotin carboxylase (AccC) and two subunits each of ACCase subunit alpha (AccA) and ACCase subunit beta (AccD).

The protein resides in the cytoplasm. It carries out the reaction N(6)-carboxybiotinyl-L-lysyl-[protein] + acetyl-CoA = N(6)-biotinyl-L-lysyl-[protein] + malonyl-CoA. Its pathway is lipid metabolism; malonyl-CoA biosynthesis; malonyl-CoA from acetyl-CoA: step 1/1. In terms of biological role, component of the acetyl coenzyme A carboxylase (ACC) complex. First, biotin carboxylase catalyzes the carboxylation of biotin on its carrier protein (BCCP) and then the CO(2) group is transferred by the carboxyltransferase to acetyl-CoA to form malonyl-CoA. In Nitrosospira multiformis (strain ATCC 25196 / NCIMB 11849 / C 71), this protein is Acetyl-coenzyme A carboxylase carboxyl transferase subunit alpha.